The primary structure comprises 438 residues: Leupeptin-inactivating enzyme 1 (438 aa).

The first 37 residues, 1-37, serve as a signal peptide directing secretion; it reads MSLSVSRRLAAVTAFAVAGLFASAVPAALAAPSAVAA. Zn(2+) contacts are provided by H125 and D137. E171 functions as the Proton acceptor in the catalytic mechanism. Zn(2+) contacts are provided by E172, D200, and H287. C285 and C290 are disulfide-bonded. The 118-residue stretch at 321-438 folds into the P/Homo B domain; the sequence is VPPGQSFENT…GYINSWKITF (118 aa).

This sequence belongs to the peptidase M28 family. M28A subfamily. In terms of assembly, monomer. It depends on Zn(2+) as a cofactor.

It is found in the secreted. Activity is inhibited by metalloprotease inhibitors and activated by Mg(2+) and Ca(2+). A leucine-specific metalloprotease that plays a role in controlling the amount of leupeptin during colony development. Degrades leupeptin into three components, acetyl-leucine, leucine and argininal. Has a strict preference for leucine at the P1 site. This Streptomyces exfoliatus (Streptomyces hydrogenans) protein is Leupeptin-inactivating enzyme 1 (lieA).